Here is a 118-residue protein sequence, read N- to C-terminus: UPF0295 protein BCE33L0445 (118 aa).

The next 2 membrane-spanning stretches (helical) occupy residues 12-32 and 43-63; these read IRTF…LGVF and FMMV…WIGM.

This sequence belongs to the UPF0295 family.

Its subcellular location is the cell membrane. The chain is UPF0295 protein BCE33L0445 from Bacillus cereus (strain ZK / E33L).